Reading from the N-terminus, the 211-residue chain is Uracil phosphoribosyltransferase (211 aa).

Residues Arg79, Arg104, and 131 to 139 each bind 5-phospho-alpha-D-ribose 1-diphosphate; that span reads DPMLATGGS. Uracil-binding positions include Ile196 and 201–203; that span reads GDA. Asp202 lines the 5-phospho-alpha-D-ribose 1-diphosphate pocket.

Belongs to the UPRTase family. Mg(2+) serves as cofactor.

It catalyses the reaction UMP + diphosphate = 5-phospho-alpha-D-ribose 1-diphosphate + uracil. Its pathway is pyrimidine metabolism; UMP biosynthesis via salvage pathway; UMP from uracil: step 1/1. With respect to regulation, allosterically activated by GTP. In terms of biological role, catalyzes the conversion of uracil and 5-phospho-alpha-D-ribose 1-diphosphate (PRPP) to UMP and diphosphate. This chain is Uracil phosphoribosyltransferase, found in Lactococcus lactis subsp. lactis (strain IL1403) (Streptococcus lactis).